The primary structure comprises 283 residues: Interferon alpha-inducible protein 27-like protein 2B (283 aa).

The N-terminal 90 residues, 1–90, are a transit peptide targeting the mitochondrion; sequence MKRKFVGAAI…AVGTATGARA (90 aa). The disordered stretch occupies residues 90 to 120; sequence AEGSMGASREQESGPQDPPQELQEPQEPPSC. 3 consecutive transmembrane segments (helical) span residues 130–150, 176–196, and 202–222; these read FVGA…ALSA, GGGI…ILGL, and IILG…MGAC. Residues 227-283 are disordered; that stretch reads PGLQDLQQEPKEPQEPQELQKQQEPQEPQELQKQQETQETQETQELQKTQEPPSYEK. Residues 242 to 283 show a composition bias toward low complexity; it reads PQELQKQQEPQEPQELQKQQETQETQETQELQKTQEPPSYEK.

Belongs to the IFI6/IFI27 family. As to quaternary structure, homooligomer. Interacts with BAK1. Interacts with BAX. Interacts with adenine nucleotide translocase.

The protein resides in the mitochondrion inner membrane. Functionally, functions in the intrinsic apoptotic signaling pathway and may have an interferon-induced antiviral activity. The chain is Interferon alpha-inducible protein 27-like protein 2B from Mus musculus (Mouse).